The sequence spans 634 residues: Serine/threonine kinase NLK (634 aa).

Positions 240-531 (SQPDRPIGYG…VEEALQHRYL (292 aa)) constitute a Protein kinase domain. ATP contacts are provided by residues 246-254 (IGYGAFGVV) and K269. The Proton acceptor role is filled by D366.

The protein belongs to the protein kinase superfamily. CMGC Ser/Thr protein kinase family. MAP kinase subfamily. As to quaternary structure, component of the beta-catenin-lit-1 complex (also called the lit-1/wrm-1 complex or the wrm-1/lit-1 kinase complex) at least composed of lit-1 and wrm-1. Interacts with wrm-1 (via N-terminus); the interaction is direct and activates lit-1 kinase activity which leads to the phosphorylation of pop-1. This promotes pop-1 interaction with par-5 and translocation of pop-1 from the nucleus to the cytoplasm. Interacts with pop-1 (when phosphorylated on 'Ser-118' and 'Ser-127'); the interaction is dependent on the beta-catenin-lit-1 complex. Mg(2+) serves as cofactor. Expressed in the pharynx and seam and vulval cells.

The protein localises to the cytoplasm. It is found in the cell cortex. Its subcellular location is the nucleus. It catalyses the reaction L-seryl-[protein] + ATP = O-phospho-L-seryl-[protein] + ADP + H(+). The catalysed reaction is L-threonyl-[protein] + ATP = O-phospho-L-threonyl-[protein] + ADP + H(+). In terms of biological role, has a role in the Wnt signaling pathway controlling the asymmetry of cell divisions during embryogenesis. Operates in the AB and EMS cell lineages influencing cell specification. Required for body wall muscle development, endoderm development, pop-1 asymmetry and T-cell division asymmetry. Component of the beta-catenin-lit-1 complex which promotes the phosphorylation, down-regulation and subcellular relocation of pop-1. Regulates plp-1 nuclear localization in embryos. Plays a role in male tail tip morphogenesis. This is Serine/threonine kinase NLK from Caenorhabditis elegans.